Here is a 508-residue protein sequence, read N- to C-terminus: Monocarboxylate transporter 9 (508 aa).

Helical transmembrane passes span 13–33 (WVIV…PLAV), 53–73 (WVGS…SLFV), 80–100 (PVTI…SLAP), 102–122 (IYFL…LLYT), 137–157 (GLAL…YAAL), and 164–184 (FYGL…ILAC). The disordered stretch occupies residues 242–263 (GDWGRETSLPKNPTGAAHTKEP). The next 6 membrane-spanning stretches (helical) occupy residues 303 to 323 (VFSA…PPSL), 341 to 361 (IPLI…LGIL), 370 to 390 (LYLY…IPLA), 396 to 416 (LAIL…FPYV), 431 to 451 (GILM…VGWF), and 460 to 480 (IAFY…LLAI).

Belongs to the major facilitator superfamily. Monocarboxylate porter (TC 2.A.1.13) family. As to expression, expressed in the liver and kidneys. In the liver localizes on the sinusoidal membrane of the hepatocytes.

It localises to the cell membrane. The catalysed reaction is creatine(in) = creatine(out). The enzyme catalyses (R)-carnitine(in) = (R)-carnitine(out). Functionally, extracellular pH-and Na(+)-sensitive low-affinity creatine transporter. Also functions as a pH-independent carnitine efflux transporter. The polypeptide is Monocarboxylate transporter 9 (Slc16a9) (Rattus norvegicus (Rat)).